The sequence spans 546 residues: Chaperonin GroEL (546 aa).

Residues 29-32 (TLGP), Lys50, 86-90 (DGTTT), Gly414, 477-479 (NAL), and Asp493 each bind ATP.

Belongs to the chaperonin (HSP60) family. As to quaternary structure, forms a cylinder of 14 subunits composed of two heptameric rings stacked back-to-back. Interacts with the co-chaperonin GroES.

The protein localises to the cytoplasm. The catalysed reaction is ATP + H2O + a folded polypeptide = ADP + phosphate + an unfolded polypeptide.. In terms of biological role, together with its co-chaperonin GroES, plays an essential role in assisting protein folding. The GroEL-GroES system forms a nano-cage that allows encapsulation of the non-native substrate proteins and provides a physical environment optimized to promote and accelerate protein folding. The sequence is that of Chaperonin GroEL from Leptospira interrogans serogroup Icterohaemorrhagiae serovar Lai (strain 56601).